The chain runs to 146 residues: 3-dehydroquinate dehydratase (146 aa).

The active-site Proton acceptor is the Y22. Substrate is bound by residues N73, H79, and D86. Catalysis depends on H99, which acts as the Proton donor. Substrate is bound by residues 100–101 (IS) and R110.

This sequence belongs to the type-II 3-dehydroquinase family. As to quaternary structure, homododecamer.

The enzyme catalyses 3-dehydroquinate = 3-dehydroshikimate + H2O. The protein operates within metabolic intermediate biosynthesis; chorismate biosynthesis; chorismate from D-erythrose 4-phosphate and phosphoenolpyruvate: step 3/7. In terms of biological role, catalyzes a trans-dehydration via an enolate intermediate. This is 3-dehydroquinate dehydratase from Prochlorococcus marinus (strain MIT 9515).